The chain runs to 70 residues: Brevinin-1S (70 aa).

The first 22 residues, 1–22 (MFTLKKSLLLLFFLGTINLSLC), serve as a signal peptide directing secretion. Residues 23–44 (EEERNAEEERRDDPEERDVEVE) constitute a propeptide that is removed on maturation. The cysteines at positions 64 and 70 are disulfide-linked.

It belongs to the frog skin active peptide (FSAP) family. Brevinin subfamily. As to expression, expressed by the skin glands.

The protein resides in the secreted. Functionally, antimicrobial peptide. This is Brevinin-1S from Odorrana schmackeri (Schmacker's frog).